The chain runs to 568 residues: U6 small nuclear RNA (adenine-(43)-N(6))-methyltransferase (568 aa).

The disordered stretch occupies residues 1 to 20; sequence MSEIDTNDIKKEMDNKNYRD. Basic and acidic residues predominate over residues 7–20; the sequence is NDIKKEMDNKNYRD. The S-adenosyl-L-methionine site is built by Arg-117, Gly-151, Asp-175, and Asn-250. 3 disordered regions span residues 363–383, 403–431, and 503–538; these read KENN…INNN, NLDS…NNNN, and DPKI…NKNN. Composition is skewed to low complexity over residues 365 to 383, 409 to 431, and 507 to 538; these read NNNI…INNN, NNNN…NNNN, and NNNN…NKNN.

Belongs to the methyltransferase superfamily. METTL16/RlmF family.

The catalysed reaction is adenosine in U6 snRNA + S-adenosyl-L-methionine = N(6)-methyladenosine in U6 snRNA + S-adenosyl-L-homocysteine + H(+). In terms of biological role, RNA N6-methyltransferase that mediates N6-methylation of adenine of U6 small nuclear RNA (U6 snRNA). This chain is U6 small nuclear RNA (adenine-(43)-N(6))-methyltransferase, found in Dictyostelium discoideum (Social amoeba).